The chain runs to 214 residues: 3-demethoxyubiquinol 3-hydroxylase (214 aa).

Residues Glu63, Glu93, His96, Glu145, Glu177, and His180 each contribute to the Fe cation site.

Belongs to the COQ7 family. The cofactor is Fe cation.

It localises to the cell membrane. The enzyme catalyses a 5-methoxy-2-methyl-3-(all-trans-polyprenyl)benzene-1,4-diol + AH2 + O2 = a 3-demethylubiquinol + A + H2O. It functions in the pathway cofactor biosynthesis; ubiquinone biosynthesis. Functionally, catalyzes the hydroxylation of 2-nonaprenyl-3-methyl-6-methoxy-1,4-benzoquinol during ubiquinone biosynthesis. The sequence is that of 3-demethoxyubiquinol 3-hydroxylase from Psychrobacter arcticus (strain DSM 17307 / VKM B-2377 / 273-4).